The following is a 402-amino-acid chain: 26S proteasome regulatory subunit 8 (402 aa).

186 to 193 serves as a coordination point for ATP; sequence GPPGTGKT.

It belongs to the AAA ATPase family.

Its subcellular location is the cytoplasm. The protein resides in the nucleus. Its function is as follows. The 26S proteasome is involved in the ATP-dependent degradation of ubiquitinated proteins. The regulatory (or ATPase) complex confers ATP dependency and substrate specificity to the 26S complex. The protein is 26S proteasome regulatory subunit 8 of Manduca sexta (Tobacco hawkmoth).